The primary structure comprises 453 residues: MSFDLIIKNGTVILENEARVIDIAVQGGKIAAIGENLEEAKNVLDATGLIVSPGMVDAHTHISEPGRTHWEGYETGTRAAAKGGITTMIEMPLNQLPATVDRETIELKFDAAKGKLTIDAAQLGGLVSYNLDRLHELDEVGVVGFKCFVATCGDRGIDNDFRDVNDWQFYKGAQKLGEMDQTVLVHCENALICDELGEEAKREGRVTAHDYVASRPVFTEVEAIRRVLYLAKAAGCRLHVCHISSPEGVEEVTRARQEGQDVTCESCPHYFVLDTDQFEEIGTLAKCSPPIRDQENQKGMWEKLFNGEIDCLVSDHSPCPPEMKAGNIMQAWGGIAGLQNCMDVMFDEAVQKRGMSLPMFGKLMATNAADIFGLKHKGRIAPGKDADLVFIQPDSSYVLKNEDLEYRHKVSPYVGRTIGARITKTILRGDVIYDIEHGFPVPPKGQFILKHQQ.

Residues H59, H61, K146, H186, H242, and D315 each coordinate Zn(2+). The residue at position 146 (K146) is an N6-carboxylysine.

Belongs to the metallo-dependent hydrolases superfamily. Allantoinase family. Homotetramer. Requires Zn(2+) as cofactor. In terms of processing, carboxylation allows a single lysine to coordinate two zinc ions.

It carries out the reaction (S)-allantoin + H2O = allantoate + H(+). It participates in nitrogen metabolism; (S)-allantoin degradation; allantoate from (S)-allantoin: step 1/1. Catalyzes the conversion of allantoin (5-ureidohydantoin) to allantoic acid by hydrolytic cleavage of the five-member hydantoin ring. This Salmonella choleraesuis (strain SC-B67) protein is Allantoinase.